The chain runs to 387 residues: Zinc finger transcription factor YY1 (387 aa).

5 consecutive C2H2-type zinc fingers follow at residues 79–103 (FLCS…SHIH), 108–132 (YVCD…YLIH), 138–162 (YICT…MKTH), 168–193 (HICP…AAYH), and 230–255 (YACP…KREH). The segment at 201 to 290 (TPKYTPPAEK…DDGSDQDVYR (90 aa)) is MED18-binding. The disordered stretch occupies residues 258–387 (HLQEENADTP…DDDEETEYED (130 aa)). Ser284 carries the post-translational modification Phosphoserine. The span at 291-305 (KHASNGKGQTHKQQS) shows a compositional bias: basic residues. A Nuclear localization signal motif is present at residues 319–326 (GKKGSTSS). A coiled-coil region spans residues 339–367 (AKETFEEVEREEEEDSEETEEDRDNVEDG). Acidic residues-rich tracts occupy residues 344–363 (EEVE…DRDN) and 373–387 (NNED…EYED).

In terms of assembly, interacts with MED18 to suppress disease susceptibility via the repression of genes glutaredoxins GRX480, GRXS13 and thioredoxin TRX-h5. In terms of tissue distribution, mostly expressed in flowers, to a lower extent in seedlings, stems and leaves, and, at low levels, in roots and senescent leaves.

It is found in the nucleus. In terms of biological role, dual-function transcription factor with both repression and activation activities. Binds to 5'-CCATATT-3' motif in target gene promoters (e.g. ABR1). Also binds to G-rich DNA motif 5'-GGGGGCAGTGG-3'. Regulates the expression of genes involved in diverse cellular pathways, including glucose metabolism, photosynthesis, phototropism and stress response (e.g. salt, drought and osmotic stress). Regulates plant immunity, especially during necrotrophic fungal infection (e.g. B.cinerea). Binds to ABR1 promoter and promotes its expression, thus negatively regulating the abscisic acid (ABA) signaling pathway. Represses ABA- and salt-responsive genes expression. This chain is Zinc finger transcription factor YY1, found in Arabidopsis thaliana (Mouse-ear cress).